The sequence spans 440 residues: C4-dicarboxylate transport protein (440 aa).

Transmembrane regions (helical) follow at residues 7-29 (LYKSLYVQVLVAITIGILLGHYY), 49-66 (MVIAPIIFCTVVSGIAGM), 79-101 (ALLYFEIVSTIALIIGLVVVNVV), 143-165 (VVGAFANGDILQVLMFSVLFGFA), 186-208 (VMFNIINMIMKLAPIGAFGAMAF), 221-243 (LGYLMACFYITCLLFVLVVLGGI), 291-313 (VVGLVIPTGYSFNLDGTSIYLTM), 328-350 (ITHQITLLLVLLVASKGAAGVTG), and 355-377 (VLAATLSAVGHLPVAGLALILGI). The tract at residues 419–440 (GGAPLIDTRPTDDLGVAEGPAR) is disordered.

Belongs to the dicarboxylate/amino acid:cation symporter (DAACS) (TC 2.A.23) family.

It is found in the cell inner membrane. Its function is as follows. Responsible for the transport of dicarboxylates such as succinate, fumarate, and malate from the periplasm across the membrane. The sequence is that of C4-dicarboxylate transport protein from Pseudomonas putida (strain ATCC 47054 / DSM 6125 / CFBP 8728 / NCIMB 11950 / KT2440).